We begin with the raw amino-acid sequence, 687 residues long: Solute carrier organic anion transporter family member 1B2 (687 aa).

Topologically, residues 1 to 28 (MDHTQQSRKAAEAQPSRSKQTRFCDGFK) are cytoplasmic. Residues 29-48 (LFLAALSFSYICKALGGVVM) form a helical membrane-spanning segment. The Extracellular portion of the chain corresponds to 49–67 (KSSITQIERRFDIPSSISG). The chain crosses the membrane as a helical span at residues 68 to 88 (LIDGGFEIGNLLVIVFVSYFG). Topologically, residues 89–94 (SKLHRP) are cytoplasmic. A helical membrane pass occupies residues 95 to 119 (KLIGIGCFIMGIGSILTALPHFFMG). The Extracellular segment spans residues 120–165 (YYKYAKENDIGSLGNSTLTCFINQMTSPTGPSPEIVEKGCEKGLKS). Residue N134 is glycosylated (N-linked (GlcNAc...) asparagine). The chain crosses the membrane as a helical span at residues 166-194 (HMWIYVLMGNMLRGIGETPIVPLGISYLD). Topologically, residues 195–213 (DFAKEGHTSMHLGTLHTIA) are cytoplasmic. The helical transmembrane segment at 214 to 234 (MIGPILGFIMSSVFAKIYVDV) threads the bilayer. Residues 235–252 (GYVDLNSVRITPNDARWV) lie on the Extracellular side of the membrane. The helical transmembrane segment at 253–277 (GAWWLSFIVNGLLCITSSIPFFFLP) threads the bilayer. At 278–328 (KIPKRSQEERKNSVSLHAPKTDEEKKHMTNLTKQEEQDPSNMTGFLRSLRS) the chain is on the cytoplasmic side. The interval 286–311 (ERKNSVSLHAPKTDEEKKHMTNLTKQ) is disordered. Phosphoserine is present on residues S290 and S292. The helical transmembrane segment at 329-350 (ILTNEIYVIFLILTLLQVSGFI) threads the bilayer. The Extracellular portion of the chain corresponds to 351–370 (GSFTYLFKFIEQQFGRTASQ). A helical membrane pass occupies residues 371–394 (ANFLLGIITIPTMATAMFLGGYIV). Topologically, residues 395–398 (KKFK) are cytoplasmic. The helical transmembrane segment at 399 to 422 (LTSVGIAKFVFFTSSVAYAFQFLY) threads the bilayer. At 423 to 531 (FPLLCENKPF…YKCKTNYYFY (109 aa)) the chain is on the extracellular side. A Kazal-like domain is found at 450 to 507 (DVPLSYCNSDCSCDKNQWEPICGENGVTYISPCLAGCKSFRGDKKPNNTEFYDCSCIS). 3 disulfides stabilise this stretch: C456/C486, C462/C482, and C471/C505. N-linked (GlcNAc...) asparagine glycans are attached at residues N496 and N511. Residues 532 to 554 (IILQVTVSFFTAMGSPSLILILM) traverse the membrane as a helical segment. Topologically, residues 555–563 (KSVQPELKS) are cytoplasmic. A helical membrane pass occupies residues 564-589 (LAMGFHSLIIRALGGILAPIYYGAFI). At 590–623 (DRTCIKWSVTSCGKRGACRLYNSRLFGFSYLGLN) the chain is on the extracellular side. A helical membrane pass occupies residues 624-641 (LALKTPPLFLYVVLIYFT). Residues 642–687 (KRKYKRNDNKTLENGRQFTDEGNPDSVNKNGYYCVPYDEQSNETPL) are Cytoplasmic-facing. T660 bears the Phosphothreonine mark. S667 carries the phosphoserine modification.

It belongs to the organo anion transporter (TC 2.A.60) family. In terms of tissue distribution, liver specific. Expression is highest in central perivenous hepatocytes and lowest in the periportal region. Isoform 1 predominates. Not detected in heart, brain, kidney, skeletal muscle, lung, testis or spleen.

Its subcellular location is the basolateral cell membrane. The catalysed reaction is estrone 3-sulfate(out) = estrone 3-sulfate(in). It carries out the reaction taurocholate(out) = taurocholate(in). It catalyses the reaction prostaglandin E2(out) = prostaglandin E2(in). The enzyme catalyses L-thyroxine(out) = L-thyroxine(in). Functionally, mediates the Na(+)-independent uptake of organic anions such as taurochlate, bromosulfophthalein and steroid conjugates (estrone 3-sulfate, 17-beta-glucuronosyl estradiol, dehydroepiandrosterone sulfate). Also transports prostaglandin E2 and L-thyroxine (T4). Shows a pH-sensitive substrate specificity which may be ascribed to the protonation state of the binding site and leads to a stimulation of substrate transport in an acidic microenvironment. Hydrogencarbonate/HCO3(-) acts as the probable counteranion that exchanges for organic anions. The polypeptide is Solute carrier organic anion transporter family member 1B2 (Slco1b2) (Rattus norvegicus (Rat)).